Here is a 570-residue protein sequence, read N- to C-terminus: Urease subunit alpha (570 aa).

Residues glycine 132–phenylalanine 570 enclose the Urease domain. Residues histidine 137, histidine 139, and lysine 220 each coordinate Ni(2+). Lysine 220 carries the N6-carboxylysine modification. Position 222 (histidine 222) interacts with substrate. Residues histidine 249 and histidine 275 each contribute to the Ni(2+) site. Histidine 323 acts as the Proton donor in catalysis. Aspartate 363 lines the Ni(2+) pocket.

This sequence belongs to the metallo-dependent hydrolases superfamily. Urease alpha subunit family. In terms of assembly, heterotrimer of UreA (gamma), UreB (beta) and UreC (alpha) subunits. Three heterotrimers associate to form the active enzyme. Ni cation is required as a cofactor. Post-translationally, carboxylation allows a single lysine to coordinate two nickel ions.

It is found in the cytoplasm. The catalysed reaction is urea + 2 H2O + H(+) = hydrogencarbonate + 2 NH4(+). Its pathway is nitrogen metabolism; urea degradation; CO(2) and NH(3) from urea (urease route): step 1/1. In Corynebacterium glutamicum (strain ATCC 13032 / DSM 20300 / JCM 1318 / BCRC 11384 / CCUG 27702 / LMG 3730 / NBRC 12168 / NCIMB 10025 / NRRL B-2784 / 534), this protein is Urease subunit alpha.